The sequence spans 172 residues: Shikimate kinase (172 aa).

ATP is bound at residue 11–16 (GAGKST). Residue serine 15 participates in Mg(2+) binding. Substrate contacts are provided by aspartate 33, arginine 57, and glycine 79. Arginine 117 serves as a coordination point for ATP. Arginine 136 contacts substrate. Arginine 153 is a binding site for ATP.

The protein belongs to the shikimate kinase family. Monomer. It depends on Mg(2+) as a cofactor.

Its subcellular location is the cytoplasm. The enzyme catalyses shikimate + ATP = 3-phosphoshikimate + ADP + H(+). The protein operates within metabolic intermediate biosynthesis; chorismate biosynthesis; chorismate from D-erythrose 4-phosphate and phosphoenolpyruvate: step 5/7. In terms of biological role, catalyzes the specific phosphorylation of the 3-hydroxyl group of shikimic acid using ATP as a cosubstrate. In Pseudomonas entomophila (strain L48), this protein is Shikimate kinase.